Consider the following 153-residue polypeptide: IWYLFRDNLLPRNTKFIGYARTKQTLAEVKEKCKKYIKVRTGEEDKLEEFWAANDYLSGSYDKRVDYEFLNQVISKYEKGPIANRIFYLAVPPTVFEDATLNIRNACTSIKGFTRVIIEKPFGRDDKSSDILSKDLAGLFKEEQIYRIDHYLG.

Arg21 and Lys120 together coordinate NADP(+). Position 120 (Lys120) interacts with D-glucose 6-phosphate.

It belongs to the glucose-6-phosphate dehydrogenase family.

The protein localises to the cytoplasm. The protein resides in the cytosol. It carries out the reaction D-glucose 6-phosphate + NADP(+) = 6-phospho-D-glucono-1,5-lactone + NADPH + H(+). Its pathway is carbohydrate degradation; pentose phosphate pathway; D-ribulose 5-phosphate from D-glucose 6-phosphate (oxidative stage): step 1/3. Functionally, cytosolic glucose-6-phosphate dehydrogenase that catalyzes the first and rate-limiting step of the oxidative branch within the pentose phosphate pathway/shunt, an alternative route to glycolysis for the dissimilation of carbohydrates and a major source of reducing power and metabolic intermediates for fatty acid and nucleic acid biosynthetic processes. This chain is Glucose-6-phosphate 1-dehydrogenase (ZW), found in Hyalophora cecropia (Cecropia moth).